The chain runs to 607 residues: Glutamine--fructose-6-phosphate aminotransferase [isomerizing] (607 aa).

C2 acts as the Nucleophile; for GATase activity in catalysis. Positions 2–217 (CGIIGIIGND…DGDWAVLTRN (216 aa)) constitute a Glutamine amidotransferase type-2 domain. 2 SIS domains span residues 283–422 (IGID…ARGA) and 455–597 (VCHD…VDQP). K602 serves as the catalytic For Fru-6P isomerization activity.

In terms of assembly, homodimer.

It is found in the cytoplasm. The enzyme catalyses D-fructose 6-phosphate + L-glutamine = D-glucosamine 6-phosphate + L-glutamate. Catalyzes the first step in hexosamine metabolism, converting fructose-6P into glucosamine-6P using glutamine as a nitrogen source. The polypeptide is Glutamine--fructose-6-phosphate aminotransferase [isomerizing] (Brucella suis biovar 1 (strain 1330)).